We begin with the raw amino-acid sequence, 245 residues long: Ribonuclease 3 (245 aa).

Residues 19 to 148 (FKVFQEKIGI…FIGALYLDQG (130 aa)) enclose the RNase III domain. Residue E61 participates in Mg(2+) binding. D65 is an active-site residue. Positions 134 and 137 each coordinate Mg(2+). E137 is a catalytic residue. A DRBM domain is found at 174–243 (DYKSQLQELI…AAEALKKLKE (70 aa)).

Belongs to the ribonuclease III family. As to quaternary structure, homodimer. Mg(2+) serves as cofactor.

The protein localises to the cytoplasm. The enzyme catalyses Endonucleolytic cleavage to 5'-phosphomonoester.. In terms of biological role, digests double-stranded RNA. Involved in the processing of primary rRNA transcript to yield the immediate precursors to the large and small rRNAs (23S and 16S). Processes some mRNAs, and tRNAs when they are encoded in the rRNA operon. Processes pre-crRNA and tracrRNA of type II CRISPR loci if present in the organism. The protein is Ribonuclease 3 of Bacillus cereus (strain AH187).